A 59-amino-acid polypeptide reads, in one-letter code: MPSSKKKKEDVPIASMAGLVRYYESEKEKVKISPKVVVVASIVLIAGVIIASFIIPPPL.

Over 1–35 the chain is Cytoplasmic; sequence MPSSKKKKEDVPIASMAGLVRYYESEKEKVKISPK. Residues 36-56 form a helical membrane-spanning segment; sequence VVVVASIVLIAGVIIASFIIP. Over 57–59 the chain is Extracellular; that stretch reads PPL.

This sequence belongs to the SEC61-beta family. Component of the protein translocase complex. Heterotrimer consisting of alpha (SecY), beta (SecG) and gamma (SecE) subunits. Can form oligomers of the heterotrimer.

It is found in the cell membrane. Involved in protein export. The function of the beta subunit is unknown, but it may be involved in stabilization of the trimeric complex. The chain is Preprotein translocase subunit SecG from Sulfolobus acidocaldarius (strain ATCC 33909 / DSM 639 / JCM 8929 / NBRC 15157 / NCIMB 11770).